We begin with the raw amino-acid sequence, 270 residues long: Neurotrophic factor BDNF precursor form (270 aa).

Positions 1-18 (MTILFVTMVISYFSCMRA) are cleaved as a signal peptide. A propeptide spanning residues 19-151 (APMREIPGVQ…AANMSMRVRR (133 aa)) is cleaved from the precursor. A glycan (N-linked (GlcNAc...) asparagine) is linked at asparagine 144. 3 disulfides stabilise this stretch: cysteine 164/cysteine 231, cysteine 209/cysteine 260, and cysteine 219/cysteine 262.

Belongs to the NGF-beta family.

It is found in the secreted. Promotes the survival of neuronal populations that are all located either in the central nervous system or directly connected to it. This chain is Neurotrophic factor BDNF precursor form (bdnf), found in Cyprinus carpio (Common carp).